We begin with the raw amino-acid sequence, 261 residues long: Na(+)-translocating NADH-quinone reductase subunit C (261 aa).

A helical transmembrane segment spans residues 12 to 32; the sequence is LGVVIGLSLVCSIIVSTAAVG. Thr-229 carries the FMN phosphoryl threonine modification.

It belongs to the NqrC family. As to quaternary structure, composed of six subunits; NqrA, NqrB, NqrC, NqrD, NqrE and NqrF. FMN is required as a cofactor.

It localises to the cell inner membrane. The enzyme catalyses a ubiquinone + n Na(+)(in) + NADH + H(+) = a ubiquinol + n Na(+)(out) + NAD(+). NQR complex catalyzes the reduction of ubiquinone-1 to ubiquinol by two successive reactions, coupled with the transport of Na(+) ions from the cytoplasm to the periplasm. NqrA to NqrE are probably involved in the second step, the conversion of ubisemiquinone to ubiquinol. This Vibrio parahaemolyticus serotype O3:K6 (strain RIMD 2210633) protein is Na(+)-translocating NADH-quinone reductase subunit C.